The chain runs to 515 residues: Cell division control protein 6 homolog (515 aa).

Positions 1–24 (MPTLRSATASASTAGTASPTAIAT) are enriched in low complexity. Residues 1 to 70 (MPTLRSATAS…TPKLLSASPR (70 aa)) form a disordered region. The segment covering 43–52 (DASQFTSPHK) has biased composition (polar residues).

The protein belongs to the CDC6/cdc18 family.

It is found in the nucleus. May be involved in the initiation of DNA replication. This is Cell division control protein 6 homolog from Oryza sativa subsp. japonica (Rice).